A 374-amino-acid polypeptide reads, in one-letter code: Aminomethyltransferase (374 aa).

This sequence belongs to the GcvT family. The glycine cleavage system is composed of four proteins: P, T, L and H.

The catalysed reaction is N(6)-[(R)-S(8)-aminomethyldihydrolipoyl]-L-lysyl-[protein] + (6S)-5,6,7,8-tetrahydrofolate = N(6)-[(R)-dihydrolipoyl]-L-lysyl-[protein] + (6R)-5,10-methylene-5,6,7,8-tetrahydrofolate + NH4(+). Its function is as follows. The glycine cleavage system catalyzes the degradation of glycine. This Caldanaerobacter subterraneus subsp. tengcongensis (strain DSM 15242 / JCM 11007 / NBRC 100824 / MB4) (Thermoanaerobacter tengcongensis) protein is Aminomethyltransferase.